Consider the following 79-residue polypeptide: UPF0154 protein SUB0399 (79 aa).

A helical transmembrane segment spans residues 4–24; it reads AIWILLIVLALIGGLFGGVFI.

This sequence belongs to the UPF0154 family.

It localises to the cell membrane. In Streptococcus uberis (strain ATCC BAA-854 / 0140J), this protein is UPF0154 protein SUB0399.